The chain runs to 216 residues: Elongation factor Ts (216 aa).

The tract at residues 81 to 84 is involved in Mg(2+) ion dislocation from EF-Tu; the sequence is TDFV.

Belongs to the EF-Ts family.

Its subcellular location is the cytoplasm. Associates with the EF-Tu.GDP complex and induces the exchange of GDP to GTP. It remains bound to the aminoacyl-tRNA.EF-Tu.GTP complex up to the GTP hydrolysis stage on the ribosome. This is Elongation factor Ts from Geotalea daltonii (strain DSM 22248 / JCM 15807 / FRC-32) (Geobacter daltonii).